The chain runs to 141 residues: Hemoglobin subunit alpha (141 aa).

A Globin domain is found at 1 to 141 (VLSSADKTNI…VSTVLTSKYR (141 aa)). Ser3 carries the post-translational modification Phosphoserine. N6-succinyllysine is present on Lys7. Phosphothreonine is present on Thr8. N6-succinyllysine is present on Lys11. The residue at position 16 (Lys16) is an N6-acetyllysine; alternate. Lys16 carries the post-translational modification N6-succinyllysine; alternate. Phosphotyrosine is present on Tyr24. Position 35 is a phosphoserine (Ser35). Lys40 is modified (N6-succinyllysine). Ser49 carries the post-translational modification Phosphoserine. An O2-binding site is contributed by His58. His87 is a binding site for heme b. Phosphoserine is present on Ser102. Position 108 is a phosphothreonine (Thr108). 2 positions are modified to phosphoserine: Ser124 and Ser131. Thr134 and Thr137 each carry phosphothreonine. Ser138 carries the post-translational modification Phosphoserine.

Belongs to the globin family. Heterotetramer of two alpha chains and two beta chains. As to expression, red blood cells.

Functionally, involved in oxygen transport from the lung to the various peripheral tissues. In terms of biological role, hemopressin acts as an antagonist peptide of the cannabinoid receptor CNR1. Hemopressin-binding efficiently blocks cannabinoid receptor CNR1 and subsequent signaling. The sequence is that of Hemoglobin subunit alpha (HBA) from Rousettus aegyptiacus (Egyptian fruit bat).